The primary structure comprises 244 residues: 1-(5-phosphoribosyl)-5-[(5-phosphoribosylamino)methylideneamino] imidazole-4-carboxamide isomerase (244 aa).

The active-site Proton acceptor is the aspartate 9. Aspartate 131 functions as the Proton donor in the catalytic mechanism.

The protein belongs to the HisA/HisF family.

The protein localises to the cytoplasm. It catalyses the reaction 1-(5-phospho-beta-D-ribosyl)-5-[(5-phospho-beta-D-ribosylamino)methylideneamino]imidazole-4-carboxamide = 5-[(5-phospho-1-deoxy-D-ribulos-1-ylimino)methylamino]-1-(5-phospho-beta-D-ribosyl)imidazole-4-carboxamide. It participates in amino-acid biosynthesis; L-histidine biosynthesis; L-histidine from 5-phospho-alpha-D-ribose 1-diphosphate: step 4/9. The polypeptide is 1-(5-phosphoribosyl)-5-[(5-phosphoribosylamino)methylideneamino] imidazole-4-carboxamide isomerase (Campylobacter jejuni subsp. jejuni serotype O:6 (strain 81116 / NCTC 11828)).